We begin with the raw amino-acid sequence, 325 residues long: Tetraacyldisaccharide 4'-kinase (325 aa).

55–62 (TAGGNGKT) contributes to the ATP binding site.

This sequence belongs to the LpxK family.

It carries out the reaction a lipid A disaccharide + ATP = a lipid IVA + ADP + H(+). Its pathway is glycolipid biosynthesis; lipid IV(A) biosynthesis; lipid IV(A) from (3R)-3-hydroxytetradecanoyl-[acyl-carrier-protein] and UDP-N-acetyl-alpha-D-glucosamine: step 6/6. Its function is as follows. Transfers the gamma-phosphate of ATP to the 4'-position of a tetraacyldisaccharide 1-phosphate intermediate (termed DS-1-P) to form tetraacyldisaccharide 1,4'-bis-phosphate (lipid IVA). In Salmonella arizonae (strain ATCC BAA-731 / CDC346-86 / RSK2980), this protein is Tetraacyldisaccharide 4'-kinase.